Reading from the N-terminus, the 355-residue chain is MKLETTYKSNNYPIIVEHQAIDHLHQFIKDYEDVVLVVDEHVNHDWHELLDFITSENNAHKLIIPSGETTKTLSFYEKTIESLLAKQLTRDTCLIAIGGGATGDFTGFLAATLLRGVDFIQVPTTILAHDSSVGGKVGINSKHGKNLIGAFYRPKAVIYDLNFLETLPYTEILSGYAEVYKHALLNDITSVNNIEAQYPNEQALASLKDIEYFLYKGIETKLNIIVQDEKESNVRKYLNLGHTFGHAVEYQFKIPHGHAVMIGIIYQFIVSNIILNTHYDISHYIQYLKSLNYPLEVIQSFEFNSLYGLMLKDKKNDQQGVQMVLLNAIGDPQVKHVDKATLSQAFEIFTTHFEK.

Residues 66–71 (SGETTK), 100–104 (GATGD), 124–125 (TT), Lys-136, Lys-145, and 163–166 (FLET) each bind NAD(+). The Zn(2+) site is built by Glu-178, His-242, and His-256.

This sequence belongs to the sugar phosphate cyclases superfamily. Dehydroquinate synthase family. It depends on Co(2+) as a cofactor. Zn(2+) is required as a cofactor. The cofactor is NAD(+).

The protein localises to the cytoplasm. The catalysed reaction is 7-phospho-2-dehydro-3-deoxy-D-arabino-heptonate = 3-dehydroquinate + phosphate. It functions in the pathway metabolic intermediate biosynthesis; chorismate biosynthesis; chorismate from D-erythrose 4-phosphate and phosphoenolpyruvate: step 2/7. Functionally, catalyzes the conversion of 3-deoxy-D-arabino-heptulosonate 7-phosphate (DAHP) to dehydroquinate (DHQ). In Staphylococcus saprophyticus subsp. saprophyticus (strain ATCC 15305 / DSM 20229 / NCIMB 8711 / NCTC 7292 / S-41), this protein is 3-dehydroquinate synthase.